The chain runs to 264 residues: Acyl-[acyl-carrier-protein]--UDP-N-acetylglucosamine O-acyltransferase (264 aa).

This sequence belongs to the transferase hexapeptide repeat family. LpxA subfamily. Homotrimer.

The protein localises to the cytoplasm. It catalyses the reaction a (3R)-hydroxyacyl-[ACP] + UDP-N-acetyl-alpha-D-glucosamine = a UDP-3-O-[(3R)-3-hydroxyacyl]-N-acetyl-alpha-D-glucosamine + holo-[ACP]. It functions in the pathway glycolipid biosynthesis; lipid IV(A) biosynthesis; lipid IV(A) from (3R)-3-hydroxytetradecanoyl-[acyl-carrier-protein] and UDP-N-acetyl-alpha-D-glucosamine: step 1/6. Functionally, involved in the biosynthesis of lipid A, a phosphorylated glycolipid that anchors the lipopolysaccharide to the outer membrane of the cell. In Glaesserella parasuis serovar 5 (strain SH0165) (Haemophilus parasuis), this protein is Acyl-[acyl-carrier-protein]--UDP-N-acetylglucosamine O-acyltransferase.